The primary structure comprises 398 residues: Selection and upkeep of intraepithelial T-cells protein 8 (398 aa).

The signal sequence occupies residues 1 to 25 (MMKPEFSHFFGFCVYFLFLQVMASS). An Ig-like V-type domain is found at 26–141 (EKLRVTTPTR…DVAIMNLNVT (116 aa)). Residues 26–244 (EKLRVTTPTR…ANELFNQDYL (219 aa)) lie on the Extracellular side of the membrane. Residues Cys49 and Cys123 are joined by a disulfide bond. N-linked (GlcNAc...) asparagine glycans are attached at residues Asn92 and Asn139. The region spanning 142–233 (AVGLETEIHV…TGEEKQTSII (92 aa)) is the Ig-like C1-type domain. Residues Cys163 and Cys217 are joined by a disulfide bond. Residues 245-265 (WVGIFPFSVLSLILFGVLPFI) form a helical membrane-spanning segment. The Cytoplasmic portion of the chain corresponds to 266–288 (NSFFRSQGCASGCLSKCLPVVTS). Residues 289 to 309 (WPVQIVHFLVCSGVLFAVYLP) traverse the membrane as a helical segment. Residues 310–331 (HRYRVSLSDPQFPLYNNWITEL) lie on the Extracellular side of the membrane. A helical membrane pass occupies residues 332–352 (LIVILFLTICFVLPITVLLLI). Residues 353–398 (KLSPTCLAKWEKNKDDIMDSQLGLGKAREASTLYEEQSRKSWEQEK) lie on the Cytoplasmic side of the membrane.

This sequence belongs to the SKINT family. Expressed in skin, thymus, testis and, to a lower extent, bladder, brain, heart, kidney, mammary gland, small intestine and uterus.

The protein localises to the membrane. In terms of biological role, may act by engaging a cell surface molecule on immature T-cells in the embryonic thymus. This Mus musculus (Mouse) protein is Selection and upkeep of intraepithelial T-cells protein 8 (Skint8).